The chain runs to 372 residues: Fatty acid 2-hydroxylase (372 aa).

Residues 8 to 86 (AASFSPSEVQ…LEQYYVGELR (79 aa)) form the Cytochrome b5 heme-binding domain. Residues His-43 and His-69 each contribute to the heme site. 2 helical membrane-spanning segments follow: residues 168–188 (VWYS…WSYY) and 213–233 (SMFP…EYLI). The region spanning 219-361 (FMLGTFLWSL…TKLWDYCFHT (143 aa)) is the Fatty acid hydroxylase domain. Residues His-234, His-239, His-257, His-260, and His-261 each contribute to the Zn(2+) site. Helical transmembrane passes span 268-288 (SRLV…YLCM) and 290-310 (LILP…GYVL). Residues His-315, His-319, His-336, His-339, and His-340 each coordinate Zn(2+).

Belongs to the sterol desaturase family. SCS7 subfamily. Requires Zn(2+) as cofactor. Detected in differentiating cultured keratinocytes (at protein level). Detected in epidermis and cultured keratinocytes. Highly expressed in brain and colon. Detected at lower levels in testis, prostate, pancreas and kidney.

The protein localises to the endoplasmic reticulum membrane. It localises to the microsome membrane. It catalyses the reaction a 1,2-saturated fatty acid + 2 Fe(II)-[cytochrome b5] + O2 + 2 H(+) = a (R)-2-hydroxy fatty acid + 2 Fe(III)-[cytochrome b5] + H2O. The enzyme catalyses hexadecanoate + 2 Fe(II)-[cytochrome b5] + O2 + 2 H(+) = (R)-2-hydroxyhexadecanoate + 2 Fe(III)-[cytochrome b5] + H2O. It carries out the reaction octadecanoate + 2 Fe(II)-[cytochrome b5] + O2 + 2 H(+) = (R)-2-hydroxyoctadecanoate + 2 Fe(III)-[cytochrome b5] + H2O. The catalysed reaction is docosanoate + 2 Fe(II)-[cytochrome b5] + O2 + 2 H(+) = 2-hydroxydocosanoate + 2 Fe(III)-[cytochrome b5] + H2O. It catalyses the reaction tetracosanoate + 2 Fe(II)-[cytochrome b5] + O2 + 2 H(+) = (R)-2-hydroxytetracosanoate + 2 Fe(III)-[cytochrome b5] + H2O. Its pathway is lipid metabolism; fatty acid metabolism. It functions in the pathway sphingolipid metabolism; galactosylceramide biosynthesis. Its function is as follows. Catalyzes the hydroxylation of free fatty acids at the C-2 position to produce 2-hydroxy fatty acids, which are building blocks of sphingolipids and glycosphingolipids common in neural tissue and epidermis. FA2H is stereospecific for the production of (R)-2-hydroxy fatty acids. Plays an essential role in the synthesis of galactosphingolipids of the myelin sheath. Responsible for the synthesis of sphingolipids and glycosphingolipids involved in the formation of epidermal lamellar bodies critical for skin permeability barrier. Participates in the synthesis of glycosphingolipids and a fraction of type II wax diesters in sebaceous gland, specifically regulating hair follicle homeostasis. Involved in the synthesis of sphingolipids of plasma membrane rafts, controlling lipid raft mobility and trafficking of raft-associated proteins. This chain is Fatty acid 2-hydroxylase, found in Homo sapiens (Human).